Reading from the N-terminus, the 194-residue chain is Cytochrome c oxidase assembly protein CtaG (194 aa).

The Cytoplasmic segment spans residues 1-12 (MALRGPAKTVAQ). Residues 13-35 (TVSVVIFMGALAWASVPLYDWFC) form a helical; Signal-anchor for type II membrane protein membrane-spanning segment. Residues 36 to 194 (RVTGFGGVTG…IEENSDTSLN (159 aa)) lie on the Periplasmic side of the membrane.

This sequence belongs to the COX11/CtaG family.

The protein localises to the cell inner membrane. In terms of biological role, exerts its effect at some terminal stage of cytochrome c oxidase synthesis, probably by being involved in the insertion of the copper B into subunit I. The sequence is that of Cytochrome c oxidase assembly protein CtaG from Roseobacter denitrificans (strain ATCC 33942 / OCh 114) (Erythrobacter sp. (strain OCh 114)).